The following is a 365-amino-acid chain: Flagellar P-ring protein (365 aa).

An N-terminal signal peptide occupies residues 1–19 (MIKFLSALILLLVTTAAQA).

The protein belongs to the FlgI family. The basal body constitutes a major portion of the flagellar organelle and consists of four rings (L,P,S, and M) mounted on a central rod.

Its subcellular location is the periplasm. The protein resides in the bacterial flagellum basal body. Functionally, assembles around the rod to form the L-ring and probably protects the motor/basal body from shearing forces during rotation. This is Flagellar P-ring protein from Shigella flexneri serotype 5b (strain 8401).